A 419-amino-acid polypeptide reads, in one-letter code: Gamma-glutamyl phosphate reductase (419 aa).

This sequence belongs to the gamma-glutamyl phosphate reductase family.

The protein resides in the cytoplasm. The catalysed reaction is L-glutamate 5-semialdehyde + phosphate + NADP(+) = L-glutamyl 5-phosphate + NADPH + H(+). Its pathway is amino-acid biosynthesis; L-proline biosynthesis; L-glutamate 5-semialdehyde from L-glutamate: step 2/2. Its function is as follows. Catalyzes the NADPH-dependent reduction of L-glutamate 5-phosphate into L-glutamate 5-semialdehyde and phosphate. The product spontaneously undergoes cyclization to form 1-pyrroline-5-carboxylate. This Nitratidesulfovibrio vulgaris (strain ATCC 29579 / DSM 644 / CCUG 34227 / NCIMB 8303 / VKM B-1760 / Hildenborough) (Desulfovibrio vulgaris) protein is Gamma-glutamyl phosphate reductase.